We begin with the raw amino-acid sequence, 163 residues long: MPRVWKFGDQINTDDILPGKYAPFMVGEDRFHLYAFAHLRPEFAKEVRPGDILVFGRNAGLGSSREYAPEALKRLGVRAIIAKSYARIFFRNLVNLGIVPFESEEVVDALEDGDEVELDLESGVLTRGEERFALRPPPPFLLEALKEGSLLDYYKKHGRFPGE.

Belongs to the LeuD family. Heterodimer of HacA and HacB.

It catalyses the reaction (2R,3S)-homoisocitrate = cis-homoaconitate + H2O. The protein operates within amino-acid biosynthesis; L-lysine biosynthesis via AAA pathway; L-alpha-aminoadipate from 2-oxoglutarate: step 3/5. Its activity is regulated as follows. Is not inhibited by lysine. Catalyzes the reversible hydration of cis-homoaconitate ((Z)-but-1-ene-1,2,4-tricarboxylate) to homoisocitrate ((1R,2S)-1-hydroxybutane-1,2,4-tricarboxylate). Can catalyze neither the dehydration of (R)-homocitrate ((2R)-2-hydroxybutane-1,2,4-tricarboxylate) into cis-homoaconitate in vitro, nor the reverse reaction. Is not active toward (S)-homocitrate, cis-aconitate or citrate as substrate. The polypeptide is Homoaconitase small subunit (hacB) (Thermus thermophilus (strain ATCC BAA-163 / DSM 7039 / HB27)).